We begin with the raw amino-acid sequence, 1011 residues long: RAS protein activator like-3 (1011 aa).

The disordered stretch occupies residues 1 to 38 (MDPPSPSRTSQTQPTATSPLTSYRWHTGGGGEKAAGGF). Residues 7–22 (SRTSQTQPTATSPLTS) show a composition bias toward low complexity. Residues serine 18 and serine 51 each carry the phosphoserine modification. Disordered stretches follow at residues 52–136 (HQEP…PVWD), 151–197 (GGEE…GPNQ), and 209–230 (KEKKKARLEPRDGPPSALGSRE). The span at 81–95 (SRLRLSKALWGRHKN) shows a compositional bias: basic residues. Residues 100–117 (PDPEPEQEAPELEPEPEL) show a composition bias toward acidic residues. The span at 118 to 131 (EPPTPQIPEAPTPN) shows a compositional bias: pro residues. Residues serine 164, serine 166, serine 167, and serine 170 each carry the phosphoserine modification. Residues 179 to 190 (RDPDRMPGKTEP) show a composition bias toward basic and acidic residues. Positions 197-293 (QVHNVRGLLK…WIEDLRRQFQ (97 aa)) constitute a PH domain. Residues serine 224, serine 228, and serine 231 each carry the phosphoserine modification. Residue threonine 234 is modified to Phosphothreonine. The C2 domain occupies 284–404 (WIEDLRRQFQ…APAAGLERWF (121 aa)). One can recognise a Ras-GAP domain in the interval 474-682 (GRAQALVTDL…PAMQCFLDQV (209 aa)). Disordered regions lie at residues 756–885 (QVHS…LGTH) and 987–1011 (LSPRTRGSWSQPQPLKAPCLNGDTT). Serine 787 and serine 790 each carry phosphoserine. Over residues 792–808 (RRSESWARPRPDEERPL) the composition is skewed to basic and acidic residues. 2 stretches are compositionally biased toward polar residues: residues 871-882 (QMDQPQDRNQAL) and 987-999 (LSPRTRGSWSQPQ). A coiled-coil region spans residues 888–988 (VNKLAELQCE…RDAVQSLQLS (101 aa)). Residue serine 988 is modified to Phosphoserine.

In terms of tissue distribution, predominantly expressed in cells of hematopoietic lineages.

Its subcellular location is the cytoplasm. The protein resides in the cell cortex. In terms of biological role, functions as a Ras GTPase-activating protein. Plays an important role in the expansion and functions of natural killer T (NKT) cells in the liver by negatively regulating RAS activity and the down-stream ERK signaling pathway. The protein is RAS protein activator like-3 (RASAL3) of Homo sapiens (Human).